We begin with the raw amino-acid sequence, 1087 residues long: Exportin-7-A (1087 aa).

Residues Ala30–Thr96 form the Importin N-terminal domain.

Belongs to the exportin family. As to expression, expressed in oocytes (at protein level).

Its subcellular location is the cytoplasm. The protein localises to the nucleus. In terms of biological role, mediates the nuclear export of proteins (cargos) with broad substrate specificity. The chain is Exportin-7-A (xpo7-a) from Xenopus laevis (African clawed frog).